We begin with the raw amino-acid sequence, 265 residues long: Tryptophan synthase alpha chain (265 aa).

Active-site proton acceptor residues include Glu48 and Asp59.

This sequence belongs to the TrpA family. As to quaternary structure, tetramer of two alpha and two beta chains.

The catalysed reaction is (1S,2R)-1-C-(indol-3-yl)glycerol 3-phosphate + L-serine = D-glyceraldehyde 3-phosphate + L-tryptophan + H2O. It functions in the pathway amino-acid biosynthesis; L-tryptophan biosynthesis; L-tryptophan from chorismate: step 5/5. Functionally, the alpha subunit is responsible for the aldol cleavage of indoleglycerol phosphate to indole and glyceraldehyde 3-phosphate. The polypeptide is Tryptophan synthase alpha chain (Ruthia magnifica subsp. Calyptogena magnifica).